A 187-amino-acid chain; its full sequence is Mitochondrial import receptor subunit TOM20-4 (187 aa).

M1 carries the N-acetylmethionine modification. Residues 1 to 160 lie on the Cytoplasmic side of the membrane; the sequence is MDMQNENERL…QKKTSEFKYD (160 aa). The stretch at 84–117 is one TPR repeat; that stretch reads LSFGFLSSDQTEASDNFEKASQFFQLAVEEQPES. The chain crosses the membrane as a helical span at residues 161-178; that stretch reads VFGWVILASYVVAWISFA. Over 179-187 the chain is Mitochondrial intermembrane; it reads NSQTPVSRQ. Positions 179–187 match the AKR2A-binding sequence (ABS) required for mitochondrion outer membrane targeting motif; the sequence is NSQTPVSRQ.

Belongs to the Tom20 family. As to quaternary structure, forms part of the preprotein translocase complex of the outer mitochondrial membrane (TOM complex) which consists of at least 6 different proteins (TOM5, TOM6, TOM7, TOM20, TOM22/TOM9 and TOM40). Interacts with a variety of mitochondrial precursor proteins. Interacts with AKR2A. Component of a mitochondrial large protein complex that contains, at least, MIC60, DGS1, TOM40, TOM20 proteins, and petC/RISP. In terms of processing, the N-terminus is blocked. As to expression, expressed in roots, flowers, young cotyledons and leaves.

It is found in the mitochondrion outer membrane. Its function is as follows. Central component of the receptor complex responsible for the recognition and translocation of cytosolically synthesized mitochondrial preproteins. Together with TOM22 functions as the transit peptide receptor at the surface of the mitochondrion outer membrane and facilitates the movement of preproteins into the translocation pore. In Arabidopsis thaliana (Mouse-ear cress), this protein is Mitochondrial import receptor subunit TOM20-4.